The sequence spans 230 residues: SPbeta prophage-derived putative HNH endonuclease YoqL (230 aa).

One can recognise an HNH domain in the interval 136 to 188; the sequence is CSYCGLKIEDHKILFKGTYIQSDFHKEHVDHKGANDISNCIPACKSCNSSKHD.

Belongs to the HNH nuclease family.

The chain is SPbeta prophage-derived putative HNH endonuclease YoqL (yoqL) from Bacillus subtilis (strain 168).